We begin with the raw amino-acid sequence, 124 residues long: Fluoride-specific ion channel FluC 2 (124 aa).

The next 4 membrane-spanning stretches (helical) occupy residues 1-21 (MNFL…YAIT), 36-58 (SNLP…FIFG), 63-85 (VFIY…TMNT), and 104-124 (LSSY…AILF). Na(+) contacts are provided by Gly-75 and Thr-78.

The protein belongs to the fluoride channel Fluc/FEX (TC 1.A.43) family. As to quaternary structure, heterodimer composed of FluC1 and FluC2. Neither FluC1 nor FluC2 alone catalyzes fluoride efflux from liposomes.

Its subcellular location is the cell membrane. It carries out the reaction fluoride(in) = fluoride(out). With respect to regulation, na(+) is not transported, but it plays an essential structural role and its presence is essential for fluoride channel function. Functionally, fluoride-specific ion channel. Important for reducing fluoride concentration in the cell, thus reducing its toxicity. The sequence is that of Fluoride-specific ion channel FluC 2 from Lactobacillus acidophilus (strain ATCC 700396 / NCK56 / N2 / NCFM).